The sequence spans 325 residues: D site-binding protein (325 aa).

3 disordered regions span residues 1 to 100 (MARP…PGLL), 124 to 198 (LEHG…DPDT), and 212 to 255 (LALS…EQKD). Residues 17-28 (GPTGAPPGGGAL) show a composition bias toward gly residues. Low complexity-rich tracts occupy residues 29 to 38 (LGLRSLLQGT) and 71 to 80 (AGPADASAGA). Residue serine 86 is modified to Phosphoserine. The segment covering 88-100 (RGRPGAAPGPGLL) has biased composition (low complexity). A compositionally biased stretch (pro residues) spans 129-153 (PPSPPPPGGPSPAPSPVRTPAPSPR). Low complexity predominate over residues 166–176 (PGHAPARAALG). Over residues 221-236 (ETFDPRRHRFSEEELK) the composition is skewed to basic and acidic residues. The 64-residue stretch at 255–318 (DEKYWSRRYK…SHYRAVLSRY (64 aa)) folds into the bZIP domain. Positions 257–279 (KYWSRRYKNNEAAKRSRDARRLK) are basic motif. The leucine-zipper stretch occupies residues 283–297 (ISVRAAFLEKENALL).

Belongs to the bZIP family. PAR subfamily. Binds DNA as a homodimer or a heterodimer. Can form a heterodimer with TEF.

The protein localises to the nucleus. This transcriptional activator recognizes and binds to the sequence 5'-RTTAYGTAAY-3' found in the promoter of genes such as albumin, CYP2A4 and CYP2A5. It is not essential for circadian rhythm generation, but modulates important clock output genes. May be a direct target for regulation by the circadian pacemaker component clock. May affect circadian period and sleep regulation. In Bos taurus (Bovine), this protein is D site-binding protein (DBP).